A 625-amino-acid chain; its full sequence is MSLDLQHYPTLALAQTPDKLRQLPQDKLRELADELREYLLNSVSQTSGHFASGLGTVELTVALHYVYNTPFDRLLWDVGHQAYPHKILTGRAERMSTIRQKNGLHPFPWPPESEYDTFAVGHSSTSISAALGMAVAAEKEGKDRKVVSVIGDGAMTAGMAFEALNHAGDIKKDMVVVLNDNEMSISENVGALNSHLARLLTGNFFNSIRDGGKKLLSNVPPIKEFASRAEEHLKGMVVPGTIFEELGFNYIGPIDGHDVNAVVDTLRNMRNFDGPQLLHVVTKKGKGYAVAEEDPIKFHAVPKFNPADNALPKSKPSAPTYSAIFGQWLCDMAAQDPKLMAVTPAMREGSGMVEFSQRFPEQYFDVAIAEQHAVTFGAGLAKDGMNAVVAIYSSFLQRAYDQLIHDVAIQDLPVLFAIDRAGIVGADGPTHQGAFDIAFLRCIPNMVVMAPSDENECRQMLYTGHKLQKPAAVRYPRGAGMGVTPDEAMTALEIGKSRTCRETAKDKSESVAILNFGCLLPYALEAAVAIDATVIDMRFIKPLDGDAVLKAANEHSALITLEDGCIMGGAGSAVLEHLQQNGVLKAVKMLGLPDSFILQGTQQEMYKEHGLDAEGIIAAAKSLIG.

Thiamine diphosphate is bound by residues H80 and 121 to 123 (GHS). D152 provides a ligand contact to Mg(2+). Thiamine diphosphate is bound by residues 153 to 154 (GA), N181, Y288, and E370. N181 provides a ligand contact to Mg(2+).

It belongs to the transketolase family. DXPS subfamily. As to quaternary structure, homodimer. It depends on Mg(2+) as a cofactor. Thiamine diphosphate is required as a cofactor.

The enzyme catalyses D-glyceraldehyde 3-phosphate + pyruvate + H(+) = 1-deoxy-D-xylulose 5-phosphate + CO2. Its pathway is metabolic intermediate biosynthesis; 1-deoxy-D-xylulose 5-phosphate biosynthesis; 1-deoxy-D-xylulose 5-phosphate from D-glyceraldehyde 3-phosphate and pyruvate: step 1/1. Its function is as follows. Catalyzes the acyloin condensation reaction between C atoms 2 and 3 of pyruvate and glyceraldehyde 3-phosphate to yield 1-deoxy-D-xylulose-5-phosphate (DXP). The chain is 1-deoxy-D-xylulose-5-phosphate synthase from Alteromonas mediterranea (strain DSM 17117 / CIP 110805 / LMG 28347 / Deep ecotype).